The primary structure comprises 311 residues: Methionyl-tRNA formyltransferase (311 aa).

112–115 (SLLP) contributes to the (6S)-5,6,7,8-tetrahydrofolate binding site.

It belongs to the Fmt family.

The enzyme catalyses L-methionyl-tRNA(fMet) + (6R)-10-formyltetrahydrofolate = N-formyl-L-methionyl-tRNA(fMet) + (6S)-5,6,7,8-tetrahydrofolate + H(+). Functionally, attaches a formyl group to the free amino group of methionyl-tRNA(fMet). The formyl group appears to play a dual role in the initiator identity of N-formylmethionyl-tRNA by promoting its recognition by IF2 and preventing the misappropriation of this tRNA by the elongation apparatus. The sequence is that of Methionyl-tRNA formyltransferase from Chelativorans sp. (strain BNC1).